Reading from the N-terminus, the 464-residue chain is Argininosuccinate lyase (464 aa).

It belongs to the lyase 1 family. Argininosuccinate lyase subfamily.

The protein resides in the cytoplasm. The enzyme catalyses 2-(N(omega)-L-arginino)succinate = fumarate + L-arginine. It functions in the pathway amino-acid biosynthesis; L-arginine biosynthesis; L-arginine from L-ornithine and carbamoyl phosphate: step 3/3. This Pseudomonas syringae pv. syringae (strain B728a) protein is Argininosuccinate lyase.